A 135-amino-acid chain; its full sequence is Large ribosomal subunit protein uL16c (135 aa).

The segment covering 1–17 has biased composition (basic residues); that stretch reads MLSPKRTKFRKQHRNRM. The interval 1-22 is disordered; that stretch reads MLSPKRTKFRKQHRNRMNGKAS.

The protein belongs to the universal ribosomal protein uL16 family. Part of the 50S ribosomal subunit.

It is found in the plastid. The protein resides in the chloroplast. This Gracilaria tenuistipitata (Red alga) protein is Large ribosomal subunit protein uL16c.